We begin with the raw amino-acid sequence, 169 residues long: Shikimate kinase (169 aa).

12 to 17 (AVGKTT) is a binding site for ATP. A Mg(2+)-binding site is contributed by threonine 16. Residues aspartate 34, arginine 58, and glycine 80 each coordinate substrate. Residue arginine 119 coordinates ATP. Residue arginine 139 participates in substrate binding. ATP is bound at residue arginine 156.

It belongs to the shikimate kinase family. Monomer. Requires Mg(2+) as cofactor.

It is found in the cytoplasm. It carries out the reaction shikimate + ATP = 3-phosphoshikimate + ADP + H(+). It functions in the pathway metabolic intermediate biosynthesis; chorismate biosynthesis; chorismate from D-erythrose 4-phosphate and phosphoenolpyruvate: step 5/7. Catalyzes the specific phosphorylation of the 3-hydroxyl group of shikimic acid using ATP as a cosubstrate. This chain is Shikimate kinase, found in Alkaliphilus oremlandii (strain OhILAs) (Clostridium oremlandii (strain OhILAs)).